We begin with the raw amino-acid sequence, 1377 residues long: Dicer-like protein 2 (1377 aa).

Residues 23 to 203 (MFEASLQENI…LSMIESNMNA (181 aa)) form the Helicase ATP-binding domain. An ATP-binding site is contributed by 36-43 (MDTGSGKT). The short motif at 144-147 (DEAH) is the DEAH box element. The Helicase C-terminal domain occupies 367–544 (KLEALISFLS…ALALETMAEV (178 aa)). The Dicer dsRNA-binding fold domain occupies 563–657 (AVARLHHFCS…LPLTRKPELR (95 aa)). 2 consecutive RNase III domains span residues 916–1056 (ATRL…MDGG) and 1090–1274 (NDSL…VDSR). Mg(2+) is bound by residues E1129, D1260, and E1263.

Belongs to the helicase family. Dicer subfamily. Mg(2+) serves as cofactor. Requires Mn(2+) as cofactor.

Its function is as follows. Dicer-like endonuclease involved in cleaving double-stranded RNA in the RNA interference (RNAi) pathway. Produces 21 to 25 bp dsRNAs (siRNAs) which target the selective destruction of homologous RNAs leading to sequence-specific suppression of gene expression, called post-transcriptional gene silencing (PTGS). Part of a broad host defense response against viral infection and transposons. The chain is Dicer-like protein 2 (dcl2) from Aspergillus terreus (strain NIH 2624 / FGSC A1156).